We begin with the raw amino-acid sequence, 151 residues long: Ribosome maturation factor RimP (151 aa).

Belongs to the RimP family.

It is found in the cytoplasm. Required for maturation of 30S ribosomal subunits. In Shewanella piezotolerans (strain WP3 / JCM 13877), this protein is Ribosome maturation factor RimP.